Here is a 470-residue protein sequence, read N- to C-terminus: ATP synthase subunit beta (470 aa).

148 to 155 contributes to the ATP binding site; the sequence is GGAGVGKT.

It belongs to the ATPase alpha/beta chains family. As to quaternary structure, F-type ATPases have 2 components, CF(1) - the catalytic core - and CF(0) - the membrane proton channel. CF(1) has five subunits: alpha(3), beta(3), gamma(1), delta(1), epsilon(1). CF(0) has three main subunits: a(1), b(2) and c(9-12). The alpha and beta chains form an alternating ring which encloses part of the gamma chain. CF(1) is attached to CF(0) by a central stalk formed by the gamma and epsilon chains, while a peripheral stalk is formed by the delta and b chains.

It localises to the cell inner membrane. The catalysed reaction is ATP + H2O + 4 H(+)(in) = ADP + phosphate + 5 H(+)(out). Produces ATP from ADP in the presence of a proton gradient across the membrane. The catalytic sites are hosted primarily by the beta subunits. The chain is ATP synthase subunit beta from Teredinibacter turnerae (strain ATCC 39867 / T7901).